A 447-amino-acid polypeptide reads, in one-letter code: UPF0210 protein LEUM_1180 (447 aa).

The protein belongs to the UPF0210 family. As to quaternary structure, homodimer.

In Leuconostoc mesenteroides subsp. mesenteroides (strain ATCC 8293 / DSM 20343 / BCRC 11652 / CCM 1803 / JCM 6124 / NCDO 523 / NBRC 100496 / NCIMB 8023 / NCTC 12954 / NRRL B-1118 / 37Y), this protein is UPF0210 protein LEUM_1180.